Consider the following 85-residue polypeptide: Beta-mammal/insect toxin Lqhb1 (85 aa).

The N-terminal stretch at 1–19 (MKIIIFLIVSSLMLIGVKT) is a signal peptide. One can recognise an LCN-type CS-alpha/beta domain in the interval 20-82 (DNGYLLNKAT…LWAYATNKCN (63 aa)). Disulfide bonds link Cys31/Cys81, Cys35/Cys56, Cys42/Cys63, and Cys46/Cys65.

It belongs to the long (4 C-C) scorpion toxin superfamily. Sodium channel inhibitor family. Expressed by the venom gland.

It localises to the secreted. Functionally, beta toxins bind voltage-independently at site-4 of sodium channels (Nav) and shift the voltage of activation toward more negative potentials thereby affecting sodium channel activation and promoting spontaneous and repetitive firing. Competes, with apparent high affinity, with anti-insect and anti-mammalian beta-toxins for binding to cockroach and rat brain synaptosomes, respectively. Also competes with an anti-mammalian alpha-toxin on binding to rat brain sodium channels. Has a weak effect on cardiac sodium channels and a marked effect on rat brain and skeletal muscle sodium channels. This is Beta-mammal/insect toxin Lqhb1 from Leiurus hebraeus (Hebrew deathstalker scorpion).